The sequence spans 171 residues: uncharacterized protein (171 aa).

The HTH gntR-type domain occupies 30 to 97 (AGRVSAAYHA…PKKGIIICAL (68 aa)). The H-T-H motif DNA-binding region spans 57–76 (EIEIARQLGMSRTPVHEAMA).

This is an uncharacterized protein from Agrobacterium vitis (Rhizobium vitis).